A 500-amino-acid polypeptide reads, in one-letter code: Maturase K (500 aa).

Belongs to the intron maturase 2 family. MatK subfamily.

The protein localises to the plastid. It localises to the chloroplast. Functionally, usually encoded in the trnK tRNA gene intron. Probably assists in splicing its own and other chloroplast group II introns. The chain is Maturase K from Proboscidea louisianica (Louisiana Devil's-claw).